We begin with the raw amino-acid sequence, 473 residues long: ATP synthase subunit beta (473 aa).

158 to 165 (GGAGVGKT) contributes to the ATP binding site.

It belongs to the ATPase alpha/beta chains family. In terms of assembly, F-type ATPases have 2 components, CF(1) - the catalytic core - and CF(0) - the membrane proton channel. CF(1) has five subunits: alpha(3), beta(3), gamma(1), delta(1), epsilon(1). CF(0) has three main subunits: a(1), b(2) and c(9-12). The alpha and beta chains form an alternating ring which encloses part of the gamma chain. CF(1) is attached to CF(0) by a central stalk formed by the gamma and epsilon chains, while a peripheral stalk is formed by the delta and b chains.

The protein localises to the cell membrane. It carries out the reaction ATP + H2O + 4 H(+)(in) = ADP + phosphate + 5 H(+)(out). Its function is as follows. Produces ATP from ADP in the presence of a proton gradient across the membrane. The catalytic sites are hosted primarily by the beta subunits. The chain is ATP synthase subunit beta from Geobacillus stearothermophilus (Bacillus stearothermophilus).